A 291-amino-acid polypeptide reads, in one-letter code: ATP synthase gamma chain (291 aa).

The protein belongs to the ATPase gamma chain family. In terms of assembly, F-type ATPases have 2 components, CF(1) - the catalytic core - and CF(0) - the membrane proton channel. CF(1) has five subunits: alpha(3), beta(3), gamma(1), delta(1), epsilon(1). CF(0) has three main subunits: a, b and c.

It localises to the cell membrane. In terms of biological role, produces ATP from ADP in the presence of a proton gradient across the membrane. The gamma chain is believed to be important in regulating ATPase activity and the flow of protons through the CF(0) complex. The sequence is that of ATP synthase gamma chain from Streptococcus equi subsp. zooepidemicus (strain MGCS10565).